Here is a 138-residue protein sequence, read N- to C-terminus: Large ribosomal subunit protein uL16 (138 aa).

It belongs to the universal ribosomal protein uL16 family. Part of the 50S ribosomal subunit.

Functionally, binds 23S rRNA and is also seen to make contacts with the A and possibly P site tRNAs. The protein is Large ribosomal subunit protein uL16 of Paramagnetospirillum magneticum (strain ATCC 700264 / AMB-1) (Magnetospirillum magneticum).